The primary structure comprises 431 residues: CinA-like protein (431 aa).

It belongs to the CinA family.

The chain is CinA-like protein from Chlorobium luteolum (strain DSM 273 / BCRC 81028 / 2530) (Pelodictyon luteolum).